Reading from the N-terminus, the 219-residue chain is MDTWHDALGGEKQQPYFQEILNAVRQERLSGQIIYPPAADVFNAFRLTAFDRVKAVILGQDPYHGAGQAHGLAFSVRQGIRIPPSLLNIYKELETDIEGFSIPAHGCLTAWAEQGVLLLNTVLTVRAGQAHSHALLGWERFTDTVIRQLATHRKHLVFMLWGGYAQQKGRLIDSQNHLILTAPHPSPLSAYRGFFGCRHFSQANSYLSRHGIDPINWKL.

D61 functions as the Proton acceptor in the catalytic mechanism.

It belongs to the uracil-DNA glycosylase (UDG) superfamily. UNG family.

Its subcellular location is the cytoplasm. It catalyses the reaction Hydrolyzes single-stranded DNA or mismatched double-stranded DNA and polynucleotides, releasing free uracil.. Functionally, excises uracil residues from the DNA which can arise as a result of misincorporation of dUMP residues by DNA polymerase or due to deamination of cytosine. In Neisseria meningitidis serogroup B (strain ATCC BAA-335 / MC58), this protein is Uracil-DNA glycosylase.